The chain runs to 756 residues: Membrane-anchored protein 1 (756 aa).

The signal sequence occupies residues 1 to 24; the sequence is MIRNTLAFLAILFLLIPTALLIIG. N-linked (GlcNAc...) asparagine glycosylation is found at N52 and N64. The next 3 helical transmembrane spans lie at 91 to 111, 120 to 140, and 148 to 168; these read IISAFLSFLSAIFVFFSIFLV, IIVVFITTLLTCLAFAIELVL, and QSYVTAGAIGSDLIAILALCL. Residue N190 is glycosylated (N-linked (GlcNAc...) asparagine). Positions 281–328 are disordered; it reads YDEFRKSESSPSRSSVLSTSKPEVHETEGYCPHKTGNRPGFPSLNIPR. The span at 289–300 shows a compositional bias: low complexity; it reads SSPSRSSVLSTS. N-linked (GlcNAc...) asparagine glycans are attached at residues N396 and N407. The interval 427–453 is disordered; it reads EPPATRMPQTRSPVNDHSSFPSDLPIK. Residues 433–447 show a composition bias toward polar residues; it reads MPQTRSPVNDHSSFP. S438 bears the Phosphoserine mark. N-linked (GlcNAc...) asparagine glycans are attached at residues N459, N470, N471, N496, N497, N521, N522, N547, N548, N573, N574, N594, N598, N599, N618, N623, N649, N664, N676, and N685. The tract at residues 482-650 is disordered; it reads MLKNVGNGPR…MPTSPNSRNN (169 aa). Residues 485 to 520 are compositionally biased toward low complexity; that stretch reads NVGNGPRNAPRNNSSNNLHAQGGMPMNMRGPRGAPR. 3 stretches are compositionally biased toward polar residues: residues 593–605, 617–629, and 640–650; these read RNTSRNNSSSEFN, RNASRSNSSTDLF, and GMPTSPNSRNN. Positions 686-697 are enriched in polar residues; sequence GSRNPSHGSLNT. Positions 686 to 713 are disordered; that stretch reads GSRNPSHGSLNTAHAGMGYGPRSMMRDP. N-linked (GlcNAc...) asparagine glycosylation is present at N715. Positions 735-756 are disordered; sequence FELPVRGNRNNRRGPGGNRMIR.

It to yeast YOL019W and YMR063W.

Its subcellular location is the cell membrane. The protein resides in the cell tip. Functionally, required for correct cell separation at high temperatures. The sequence is that of Membrane-anchored protein 1 (mac1) from Schizosaccharomyces pombe (strain 972 / ATCC 24843) (Fission yeast).